We begin with the raw amino-acid sequence, 120 residues long: Large ribosomal subunit protein uL18 (120 aa).

A disordered region spans residues 1 to 26; sequence MSKAKVTNARRKRSVRLKLRRSGGGR. Residues 8–23 are compositionally biased toward basic residues; it reads NARRKRSVRLKLRRSG.

It belongs to the universal ribosomal protein uL18 family. As to quaternary structure, part of the 50S ribosomal subunit; part of the 5S rRNA/L5/L18/L25 subcomplex. Contacts the 5S and 23S rRNAs.

Its function is as follows. This is one of the proteins that bind and probably mediate the attachment of the 5S RNA into the large ribosomal subunit, where it forms part of the central protuberance. This chain is Large ribosomal subunit protein uL18, found in Bradyrhizobium diazoefficiens (strain JCM 10833 / BCRC 13528 / IAM 13628 / NBRC 14792 / USDA 110).